The following is a 472-amino-acid chain: Maintenance of mitochondrial morphology protein 1 (472 aa).

Residues 1–22 lie on the Lumenal side of the membrane; it reads MAFQQGEAAPVSTQSSLSFTQG. The helical transmembrane segment at 23-43 threads the bilayer; it reads FLLGQLSVVLLIGAFIKFFIF. Topologically, residues 44–472 are cytoplasmic; sequence GEAPPPPSRG…GSMPEAPGAQ (429 aa). Disordered regions lie at residues 51–92, 270–303, and 370–472; these read SRGL…VPSS, LHTP…PKSS, and RMGR…PGAQ. Residues 81 to 92 are compositionally biased toward polar residues; it reads STSNVLRPVPSS. In terms of domain architecture, SMP-LTD spans 124 to 365; it reads QPESLDWFNV…EPRVQVVGLP (242 aa). Pro residues predominate over residues 270 to 280; that stretch reads LHTPSPMPSPP. Residues 281 to 297 are compositionally biased toward low complexity; sequence TAGAQPAAGAQPTDGGD. The span at 450–460 shows a compositional bias: basic and acidic residues; the sequence is TRERSLGDDFH.

It belongs to the MMM1 family. Homodimer. Component of the ER-mitochondria encounter structure (ERMES) or MDM complex, composed of mmm1, mdm10, mdm12 and mdm34. A mmm1 homodimer associates with one molecule of mdm12 on each side in a pairwise head-to-tail manner, and the SMP-LTD domains of mmm1 and mdm12 generate a continuous hydrophobic tunnel for phospholipid trafficking.

The protein localises to the endoplasmic reticulum membrane. In terms of biological role, component of the ERMES/MDM complex, which serves as a molecular tether to connect the endoplasmic reticulum (ER) and mitochondria. Components of this complex are involved in the control of mitochondrial shape and protein biogenesis, and function in nonvesicular lipid trafficking between the ER and mitochondria. The mdm12-mmm1 subcomplex functions in the major beta-barrel assembly pathway that is responsible for biogenesis of all outer membrane beta-barrel proteins, and acts in a late step after the SAM complex. The mdm10-mdm12-mmm1 subcomplex further acts in the TOM40-specific pathway after the action of the mdm12-mmm1 complex. Essential for establishing and maintaining the structure of mitochondria and maintenance of mtDNA nucleoids. In Emericella nidulans (strain FGSC A4 / ATCC 38163 / CBS 112.46 / NRRL 194 / M139) (Aspergillus nidulans), this protein is Maintenance of mitochondrial morphology protein 1.